We begin with the raw amino-acid sequence, 424 residues long: S-phase kinase-associated protein 2 (424 aa).

Residues 52-73 (PHGLLSNLGHPQSPPRKRVKGK) form a disordered region. S64 is subject to Phosphoserine. Residues 67-73 (RKRVKGK) carry the Nuclear localization signal motif. 2 positions are modified to N6-acetyllysine; by p300/EP300: K68 and K71. A Phosphoserine modification is found at S75. One can recognise an F-box domain in the interval 94–140 (GVSWDSLPDELLLGIFSCLCLPELLRVSGVCKRWYRLSLDESLWQSL). 10 LRR repeats span residues 151-176 (VTVR…PLGE), 177-204 (SFSS…ILSE), 210-234 (NLSL…NLVR), 235-257 (LNLC…SCSR), 258-284 (LDEL…LPNT), 286-308 (TQLN…IIKR), 309-330 (CPNL…CFPE), 334-356 (LNYL…LLEL), 359-378 (IPTL…TLQL), and 380-401 (REAL…RPTM). S179 is modified (phosphoserine).

As to quaternary structure, part of a SCF(SKP2) complex consisting of CUL1, RBX1, SKP1 and SKP2. Component of a SCF(SKP2)-like complex containing CUL1, SKP1, TRIM21 and SKP2. Interacts directly with CUL1 and SKP1. Interacts with ASB2 which is the substrate-recognition component of a probable ECS E3 ubiquitin-protein ligase complex; ASB2 is likely to bridge the formation of dimeric E3-ubiquitin-protein ligase complexes composed of an ECS complex and an SCF(SKP2) complex. Interacts with CKS1. Interacts with the cyclin-A-CDK2 complex. Interacts with ORC1, phosphorylated CDT1, phosphorylated RBL2, ELF4, phosphorylated RAG2, FOXO1, UBP43, MYC, TOB1, TAL1 and KMT2A/MLL1. Interacts with TRIM21. Interacts with cyclin-E. Interacts with CARM1. Post-translationally, phosphorylated on serine and threonine resudues in response to DNA damage, promoting 'Lys-63'-linked ubiquitination of NBN. Ubiquitinated by the APC/C complex, leading to its degradation by the proteasome. Deubiquitinated by USP13. In terms of processing, acetylation at Lys-68 and Lys-71 increases stability through impairment of APC/C-mediated proteolysis and promotes cytoplasmic retention. Deacetylated by SIRT3.

It localises to the cytoplasm. It is found in the nucleus. Its pathway is protein modification; protein ubiquitination. Substrate recognition component of a SCF (SKP1-CUL1-F-box protein) E3 ubiquitin-protein ligase complex which mediates the ubiquitination and subsequent proteasomal degradation of target proteins involved in cell cycle progression, signal transduction and transcription. Specifically recognizes phosphorylated CDKN1B/p27kip and is involved in regulation of G1/S transition. Degradation of CDKN1B/p27kip also requires CKS1. Recognizes target proteins ORC1, CDT1, RBL2, KMT2A/MLL1, CDK9, RAG2, NBN, FOXO1, UBP43, YTHDF2, and probably MYC, TOB1 and TAL1. Degradation of TAL1 also requires STUB1. Recognizes CDKN1A in association with CCNE1 or CCNE2 and CDK2. Promotes ubiquitination and destruction of CDH1 in a CK1-dependent manner, thereby regulating cell migration. Following phosphorylation in response to DNA damage, mediates 'Lys-63'-linked ubiquitination of NBN, promoting ATM recruitment to DNA damage sites and DNA repair via homologous recombination. Its function is as follows. Through the ubiquitin-mediated proteasomal degradation of viral proteins may have an antiviral activity. This Mus musculus (Mouse) protein is S-phase kinase-associated protein 2 (Skp2).